The chain runs to 331 residues: uncharacterized protein (331 aa).

It belongs to the proline racemase family.

This is an uncharacterized protein from Bacillus anthracis.